The chain runs to 118 residues: NADH-quinone oxidoreductase subunit A (118 aa).

3 helical membrane passes run 8-28, 61-81, and 86-106; these read ILIF…LNYL, FMYA…YPWA, and VLGL…VLGL.

The protein belongs to the complex I subunit 3 family. NDH-1 is composed of 14 different subunits. Subunits NuoA, H, J, K, L, M, N constitute the membrane sector of the complex.

The protein resides in the cell membrane. The enzyme catalyses a quinone + NADH + 5 H(+)(in) = a quinol + NAD(+) + 4 H(+)(out). In terms of biological role, NDH-1 shuttles electrons from NADH, via FMN and iron-sulfur (Fe-S) centers, to quinones in the respiratory chain. The immediate electron acceptor for the enzyme in this species is believed to be a menaquinone. Couples the redox reaction to proton translocation (for every two electrons transferred, four hydrogen ions are translocated across the cytoplasmic membrane), and thus conserves the redox energy in a proton gradient. This chain is NADH-quinone oxidoreductase subunit A, found in Carboxydothermus hydrogenoformans (strain ATCC BAA-161 / DSM 6008 / Z-2901).